Here is a 293-residue protein sequence, read N- to C-terminus: Ribosomal protein L11 methyltransferase (293 aa).

4 residues coordinate S-adenosyl-L-methionine: threonine 145, glycine 166, aspartate 188, and asparagine 230.

It belongs to the methyltransferase superfamily. PrmA family.

The protein localises to the cytoplasm. It carries out the reaction L-lysyl-[protein] + 3 S-adenosyl-L-methionine = N(6),N(6),N(6)-trimethyl-L-lysyl-[protein] + 3 S-adenosyl-L-homocysteine + 3 H(+). Functionally, methylates ribosomal protein L11. In Shewanella denitrificans (strain OS217 / ATCC BAA-1090 / DSM 15013), this protein is Ribosomal protein L11 methyltransferase.